We begin with the raw amino-acid sequence, 93 residues long: Large ribosomal subunit protein bL27 (93 aa).

A propeptide spanning residues 1-9 is cleaved from the precursor; it reads MLQLNLQFF. Residues 14-33 are disordered; sequence GVGSTKNGRDSISKRLGAKR.

Belongs to the bacterial ribosomal protein bL27 family. Post-translationally, the N-terminus is cleaved by ribosomal processing cysteine protease Prp.

The sequence is that of Large ribosomal subunit protein bL27 from Exiguobacterium sp. (strain ATCC BAA-1283 / AT1b).